The sequence spans 187 residues: Elongation factor P (187 aa).

This sequence belongs to the elongation factor P family.

It is found in the cytoplasm. It participates in protein biosynthesis; polypeptide chain elongation. In terms of biological role, involved in peptide bond synthesis. Stimulates efficient translation and peptide-bond synthesis on native or reconstituted 70S ribosomes in vitro. Probably functions indirectly by altering the affinity of the ribosome for aminoacyl-tRNA, thus increasing their reactivity as acceptors for peptidyl transferase. This chain is Elongation factor P, found in Zymomonas mobilis subsp. mobilis (strain ATCC 31821 / ZM4 / CP4).